Consider the following 646-residue polypeptide: Macrolide export ATP-binding/permease protein MacB (646 aa).

An ABC transporter domain is found at 7–245; it reads IRLEDICKTF…EATLQPHEEI (239 aa). Residue 43–50 participates in ATP binding; it reads GASGSGKS. A run of 4 helical transmembrane segments spans residues 274–294, 528–548, 572–592, and 609–629; these read VLTLLGIIIGVSSVVTMLAIG, VAAISLLVGGIGVMNIMLVSV, FIIEALSVSAIGGAIGVILGL, and FGPVLLAFACAFATGLIFGFL.

Belongs to the ABC transporter superfamily. Macrolide exporter (TC 3.A.1.122) family. As to quaternary structure, homodimer.

It localises to the cell inner membrane. In terms of biological role, non-canonical ABC transporter that contains transmembrane domains (TMD), which form a pore in the inner membrane, and an ATP-binding domain (NBD), which is responsible for energy generation. Confers resistance against macrolides. The protein is Macrolide export ATP-binding/permease protein MacB of Brucella abortus (strain 2308).